The primary structure comprises 230 residues: uncharacterized protein (230 aa).

The signal sequence occupies residues 1-21 (MARYDARLRGIGKAHACSAFA). The tract at residues 47-190 (SASVQENFIA…TVQTSSSGDP (144 aa)) is disordered. Polar residues predominate over residues 141–150 (PQSQTSANSQ). The segment covering 151 to 165 (KKPEIRCRERSKNAR) has biased composition (basic and acidic residues). The segment covering 173–188 (AVATNEAETVQTSSSG) has biased composition (polar residues).

It to R.meliloti RA0936 and y4aO.

This is an uncharacterized protein from Sinorhizobium fredii (strain NBRC 101917 / NGR234).